Reading from the N-terminus, the 259-residue chain is Caffeoyl-CoA O-methyltransferase (259 aa).

Position 33 (K33) interacts with substrate. Residues T75, E97, 99–100 (GV), S105, D123, and A152 each bind S-adenosyl-L-methionine. Residue D175 coordinates substrate. D175 contributes to the a divalent metal cation binding site. Residue D177 participates in S-adenosyl-L-methionine binding. Residues D201 and N202 each contribute to the a divalent metal cation site. N206 is a binding site for substrate.

This sequence belongs to the class I-like SAM-binding methyltransferase superfamily. Cation-dependent O-methyltransferase family. CCoAMT subfamily. Requires a divalent metal cation as cofactor.

The enzyme catalyses (E)-caffeoyl-CoA + S-adenosyl-L-methionine = (E)-feruloyl-CoA + S-adenosyl-L-homocysteine + H(+). The protein operates within aromatic compound metabolism; phenylpropanoid biosynthesis. In terms of biological role, methylates caffeoyl-CoA to feruloyl-CoA and 5-hydroxyferuloyl-CoA to sinapoyl-CoA. Plays a role in the synthesis of feruloylated polysaccharides. Involved in the reinforcement of the plant cell wall. Also involved in the responding to wounding or pathogen challenge by the increased formation of cell wall-bound ferulic acid polymers. The protein is Caffeoyl-CoA O-methyltransferase (CCOAOMT) of Pinus taeda (Loblolly pine).